We begin with the raw amino-acid sequence, 1430 residues long: Bromodomain-containing protein homolog (1430 aa).

A C2H2-type zinc finger spans residues 23–49 (FACPVRGCDRSYKTIMGLQYHLMKYDH). The interval 51-111 (NPQPLTPVLT…AGGGSASGVS (61 aa)) is disordered. Residues 62–81 (SRKKARSRSGGHHSTPRPHK) are compositionally biased toward basic residues. Residues 283 to 333 (DAVCCICLDGECQNTNVILFCDMCNLAVHQDCYGVPYIPEGQWLCRRCLQS) form a PHD-type 1 zinc finger. Residues Cys-286, Cys-289, Cys-303, Cys-306, His-311, Cys-314, Cys-327, and Cys-330 each coordinate Zn(2+). The C2HC pre-PHD-type zinc-finger motif lies at 337–370 (PVNCVLCPNAGGAFKQTDHGQWAHVVCALWIPEV). The segment at 394–457 (LTCYVCKEKG…QKFAYCHAHT (64 aa)) adopts a PHD-type 2 zinc-finger fold. Residues 611–715 (LQLNPLEAAL…DQAAPLFVQV (105 aa)) enclose the Bromo domain. The span at 796 to 805 (KARFAARHSS) shows a compositional bias: basic residues. 4 disordered regions span residues 796-887 (KARF…SSPV), 901-942 (AQAA…TTAA), 1012-1054 (ANLP…QALP), and 1076-1301 (QRDV…GQKP). Residues 842-857 (HDDDDEEEDSDEDSMG) show a composition bias toward acidic residues. A compositionally biased stretch (polar residues) spans 865–887 (LLNSTQTPPCSPIKSLNNSSSPV). 3 stretches are compositionally biased toward low complexity: residues 922-942 (NSQS…TTAA), 1034-1043 (SSSMSPKKSP), and 1085-1107 (APSQ…SCSD). Over residues 1108–1120 (FDSDEASEGDADG) the composition is skewed to acidic residues. A compositionally biased stretch (basic and acidic residues) spans 1121 to 1137 (DPDRDGGRSRSEERDST). 2 stretches are compositionally biased toward polar residues: residues 1151–1165 (ASLN…NMAI) and 1265–1278 (NTTA…TNNN). Residues 1281–1293 (KHSEDSASSERHN) show a composition bias toward basic and acidic residues. Positions 1305 to 1378 (PLQLVWAKCR…TWQWLPANKL (74 aa)) constitute a PWWP domain.

In terms of assembly, component of the Enok complex composed of at least Br140, enok, Eaf6 and Ing5. As part of the Enok complex, interacts with elg1 and the Elg1 RFC-like complex.

It is found in the nucleus. In terms of biological role, scaffold subunit of the histone acetyltransferase (HAT) Enok complex which has histone H3 acetyltransferase activity. As part of the Enok complex, associates with the Elg1 RFC-like complex and down-regulates its PCNA-unloading function to promote the G1/S transition. May also play a role in maintaining the protein levels and stability of enok. The polypeptide is Bromodomain-containing protein homolog (Drosophila melanogaster (Fruit fly)).